The following is a 417-amino-acid chain: D-amino acid dehydrogenase (417 aa).

3 to 17 (VVILGSGVVGVSTAW) contributes to the FAD binding site.

It belongs to the DadA oxidoreductase family. FAD is required as a cofactor.

It carries out the reaction a D-alpha-amino acid + A + H2O = a 2-oxocarboxylate + AH2 + NH4(+). It functions in the pathway amino-acid degradation; D-alanine degradation; NH(3) and pyruvate from D-alanine: step 1/1. Oxidative deamination of D-amino acids. This Pectobacterium atrosepticum (strain SCRI 1043 / ATCC BAA-672) (Erwinia carotovora subsp. atroseptica) protein is D-amino acid dehydrogenase.